The chain runs to 511 residues: Putative polyol transporter 2 (511 aa).

Helical transmembrane passes span 25–45, 63–83, 94–114, 117–137, 156–176, 186–206, 284–304, 324–344, 351–371, 384–404, 424–444, and 454–474; these read FAFA…YDIG, VQLE…SGAA, YTIV…GFAT, PFIM…MMIA, FPEI…YFFA, FMLG…LAMP, ILIA…DAVV, LATV…TCLV, ALLL…GTSL, WAIG…SLGA, GASL…MTFL, and GAFL…FTFL.

The protein belongs to the major facilitator superfamily. Sugar transporter (TC 2.A.1.1) family.

It localises to the membrane. Its function is as follows. Plasma membrane sugar-proton symporter. This Arabidopsis thaliana (Mouse-ear cress) protein is Putative polyol transporter 2 (PLT2).